A 127-amino-acid chain; its full sequence is Large ribosomal subunit protein bL17 (127 aa).

Belongs to the bacterial ribosomal protein bL17 family. Part of the 50S ribosomal subunit. Contacts protein L32.

The protein is Large ribosomal subunit protein bL17 of Leuconostoc mesenteroides subsp. mesenteroides (strain ATCC 8293 / DSM 20343 / BCRC 11652 / CCM 1803 / JCM 6124 / NCDO 523 / NBRC 100496 / NCIMB 8023 / NCTC 12954 / NRRL B-1118 / 37Y).